The sequence spans 81 residues: Photosystem I iron-sulfur center (81 aa).

2 4Fe-4S ferredoxin-type domains span residues 2 to 31 (SHSV…MIPW) and 39 to 68 (IASA…VRVS). [4Fe-4S] cluster contacts are provided by cysteine 11, cysteine 14, cysteine 17, cysteine 21, cysteine 48, cysteine 51, cysteine 54, and cysteine 58.

As to quaternary structure, the eukaryotic PSI reaction center is composed of at least 11 subunits. The cofactor is [4Fe-4S] cluster.

The protein localises to the plastid. It is found in the chloroplast thylakoid membrane. It catalyses the reaction reduced [plastocyanin] + hnu + oxidized [2Fe-2S]-[ferredoxin] = oxidized [plastocyanin] + reduced [2Fe-2S]-[ferredoxin]. Functionally, apoprotein for the two 4Fe-4S centers FA and FB of photosystem I (PSI); essential for photochemical activity. FB is the terminal electron acceptor of PSI, donating electrons to ferredoxin. The C-terminus interacts with PsaA/B/D and helps assemble the protein into the PSI complex. Required for binding of PsaD and PsaE to PSI. PSI is a plastocyanin-ferredoxin oxidoreductase, converting photonic excitation into a charge separation, which transfers an electron from the donor P700 chlorophyll pair to the spectroscopically characterized acceptors A0, A1, FX, FA and FB in turn. In Daucus carota (Wild carrot), this protein is Photosystem I iron-sulfur center.